A 146-amino-acid chain; its full sequence is Large ribosomal subunit protein uL11 (146 aa).

It belongs to the universal ribosomal protein uL11 family. Part of the ribosomal stalk of the 50S ribosomal subunit. Interacts with L10 and the large rRNA to form the base of the stalk. L10 forms an elongated spine to which L12 dimers bind in a sequential fashion forming a multimeric L10(L12)X complex. Post-translationally, one or more lysine residues are methylated.

In terms of biological role, forms part of the ribosomal stalk which helps the ribosome interact with GTP-bound translation factors. This chain is Large ribosomal subunit protein uL11, found in Blochmanniella floridana.